We begin with the raw amino-acid sequence, 179 residues long: Large ribosomal subunit protein uL6 (179 aa).

The protein belongs to the universal ribosomal protein uL6 family. As to quaternary structure, part of the 50S ribosomal subunit.

Its function is as follows. This protein binds to the 23S rRNA, and is important in its secondary structure. It is located near the subunit interface in the base of the L7/L12 stalk, and near the tRNA binding site of the peptidyltransferase center. In Bacillus velezensis (strain DSM 23117 / BGSC 10A6 / LMG 26770 / FZB42) (Bacillus amyloliquefaciens subsp. plantarum), this protein is Large ribosomal subunit protein uL6.